The primary structure comprises 120 residues: NAD(P)H-quinone oxidoreductase subunit 3, organellar chromatophore (120 aa).

The next 3 membrane-spanning stretches (helical) occupy residues 6–26, 64–84, and 89–109; these read GYDA…LALL, MFAL…PWAV, and LGLL…IALA.

The protein belongs to the complex I subunit 3 family. In terms of assembly, NDH is composed of at least 16 different subunits, 5 of which are encoded in the nucleus.

The protein resides in the plastid. The protein localises to the organellar chromatophore thylakoid membrane. The catalysed reaction is a plastoquinone + NADH + (n+1) H(+)(in) = a plastoquinol + NAD(+) + n H(+)(out). The enzyme catalyses a plastoquinone + NADPH + (n+1) H(+)(in) = a plastoquinol + NADP(+) + n H(+)(out). Its function is as follows. NDH shuttles electrons from NAD(P)H:plastoquinone, via FMN and iron-sulfur (Fe-S) centers, to quinones in the photosynthetic chain and possibly in a chloroplast respiratory chain. The immediate electron acceptor for the enzyme in this species is believed to be plastoquinone. Couples the redox reaction to proton translocation, and thus conserves the redox energy in a proton gradient. This is NAD(P)H-quinone oxidoreductase subunit 3, organellar chromatophore from Paulinella chromatophora.